We begin with the raw amino-acid sequence, 234 residues long: MAQRALVLHRWDYQETSLILDLFTEDKGRVRVVAKGAKRPKSPWRGLAQPFMPLLAEFQGRSDLKTLTLLEPQQTTQKLLLQGDKLYSGFYLNELIQRLVPTEAEAPELFESYLSALQNMTNSERVEPALRQFEWQLLQHLGAAFDWHYDADTGNVLSDSKWCYFIPDHGFVTQARDNQQRAYSVADIQKLAAWDVDDENRLRLLKYIMRDALAVYLGDKPLRSRELFRGTKRQ.

It belongs to the RecO family.

Its function is as follows. Involved in DNA repair and RecF pathway recombination. In Idiomarina loihiensis (strain ATCC BAA-735 / DSM 15497 / L2-TR), this protein is DNA repair protein RecO.